The primary structure comprises 240 residues: Probable septum site-determining protein MinC (240 aa).

It belongs to the MinC family. In terms of assembly, interacts with MinD and FtsZ.

Its function is as follows. Cell division inhibitor that blocks the formation of polar Z ring septums. Rapidly oscillates between the poles of the cell to destabilize FtsZ filaments that have formed before they mature into polar Z rings. Prevents FtsZ polymerization. The chain is Probable septum site-determining protein MinC from Acinetobacter baumannii (strain ATCC 17978 / DSM 105126 / CIP 53.77 / LMG 1025 / NCDC KC755 / 5377).